A 303-amino-acid chain; its full sequence is Glutathione transport system permease protein GsiD (303 aa).

7 consecutive transmembrane segments (helical) span residues Gln-37–Ala-57, Leu-105–Leu-125, Leu-144–Ile-164, Ala-165–Gly-185, Thr-208–Met-228, Ile-230–Pro-250, and Val-266–Phe-286. Positions Ala-101–Gly-290 constitute an ABC transmembrane type-1 domain.

The protein belongs to the binding-protein-dependent transport system permease family. In terms of assembly, the complex is composed of two ATP-binding proteins (GsiA), two transmembrane proteins (GsiC and GsiD) and a solute-binding protein (GsiB).

Its subcellular location is the cell inner membrane. In terms of biological role, part of the ABC transporter complex GsiABCD involved in glutathione import. Probably responsible for the translocation of the substrate across the membrane. In Salmonella paratyphi A (strain ATCC 9150 / SARB42), this protein is Glutathione transport system permease protein GsiD.